A 743-amino-acid polypeptide reads, in one-letter code: Neutral ceramidase (743 aa).

The Cytoplasmic portion of the chain corresponds to 1 to 14 (MASKSRRLSGLEIS). The helical; Signal-anchor for type II membrane protein transmembrane segment at 15 to 35 (LIVLFLLMTAVSVALITVLAL) threads the bilayer. Over 36–743 (KQESDKKEEV…FKVARSFYYF (708 aa)) the chain is Lumenal. The disordered stretch occupies residues 40 to 60 (DKKEEVTPEEPSPSVTPPEKP). Over residues 49–59 (EPSPSVTPPEK) the composition is skewed to pro residues. Histidine 151 and histidine 260 together coordinate Zn(2+). Asparagine 265 carries N-linked (GlcNAc...) asparagine glycosylation. Serine 312 serves as the catalytic Nucleophile. Intrachain disulfides connect cysteine 320–cysteine 334 and cysteine 327–cysteine 342. 4 N-linked (GlcNAc...) asparagine glycosylation sites follow: asparagine 331, asparagine 389, asparagine 398, and asparagine 451. A disulfide bond links cysteine 406 and cysteine 456. Glutamate 498 and tyrosine 538 together coordinate Zn(2+). The N-linked (GlcNAc...) asparagine glycan is linked to asparagine 661. The Ca(2+) site is built by aspartate 672, serine 674, and threonine 677. Residue asparagine 720 is glycosylated (N-linked (GlcNAc...) asparagine).

This sequence belongs to the neutral ceramidase family. The cofactor is Zn(2+). Post-translationally, N-glycosylated. In terms of processing, O-glycosylated. Detected in intestine (at protein level).

The protein localises to the cell membrane. It is found in the membrane raft. It localises to the membrane. Its subcellular location is the caveola. The protein resides in the golgi apparatus membrane. The protein localises to the mitochondrion. It is found in the secreted. It localises to the extracellular exosome. It carries out the reaction an N-acylsphing-4-enine + H2O = sphing-4-enine + a fatty acid. The catalysed reaction is N-dodecanoylsphing-4-enine + H2O = dodecanoate + sphing-4-enine. Its pathway is lipid metabolism; sphingolipid metabolism. Functionally, plasma membrane ceramidase that hydrolyzes sphingolipid ceramides into sphingosine and free fatty acids at neutral pH. Ceramides, sphingosine, and its phosphorylated form sphingosine-1-phosphate are bioactive lipids that mediate cellular signaling pathways regulating several biological processes including cell proliferation, apoptosis and differentiation. Also catalyzes the reverse reaction allowing the synthesis of ceramides from fatty acids and sphingosine. Together with sphingomyelinase, participates in the production of sphingosine and sphingosine-1-phosphate from the degradation of sphingomyelin, a sphingolipid enriched in the plasma membrane of cells. Also participates in the hydrolysis of ceramides from the extracellular milieu allowing the production of sphingosine-1-phosphate inside and outside cells. The protein is Neutral ceramidase (asah2) of Danio rerio (Zebrafish).